Reading from the N-terminus, the 73-residue chain is MAAEFDGKIESKGLNPGLIVLLVIGGLLLTFLVGNFILYTYAQKNLPPRKKKPVSKKKMKKEKMKQGVQVPGE.

The Nuclear localization signal signature appears at 47-52; that stretch reads PPRKKK. Over residues 47–63 the composition is skewed to basic residues; it reads PPRKKKPVSKKKMKKEK. The segment at 47–73 is disordered; that stretch reads PPRKKKPVSKKKMKKEKMKQGVQVPGE.

It belongs to the S1FA transcription factor family.

Its subcellular location is the nucleus. DNA-binding protein that specifically recognizes a negative element (S1F) within the RPS1 promoter. The sequence is that of DNA-binding protein S1FA3 (S1FA3) from Arabidopsis thaliana (Mouse-ear cress).